The chain runs to 269 residues: Formamidopyrimidine-DNA glycosylase (269 aa).

Residue Pro2 is the Schiff-base intermediate with DNA of the active site. Glu3 acts as the Proton donor in catalysis. The active-site Proton donor; for beta-elimination activity is the Lys57. Residues His90, Arg109, and Lys150 each contribute to the DNA site. The FPG-type zinc finger occupies 235–269 (QVYGRKGEPCRVCGTPIVATKHAQRATFYCRHCQK). The Proton donor; for delta-elimination activity role is filled by Arg259.

The protein belongs to the FPG family. In terms of assembly, monomer. Zn(2+) serves as cofactor.

The catalysed reaction is Hydrolysis of DNA containing ring-opened 7-methylguanine residues, releasing 2,6-diamino-4-hydroxy-5-(N-methyl)formamidopyrimidine.. It catalyses the reaction 2'-deoxyribonucleotide-(2'-deoxyribose 5'-phosphate)-2'-deoxyribonucleotide-DNA = a 3'-end 2'-deoxyribonucleotide-(2,3-dehydro-2,3-deoxyribose 5'-phosphate)-DNA + a 5'-end 5'-phospho-2'-deoxyribonucleoside-DNA + H(+). Its function is as follows. Involved in base excision repair of DNA damaged by oxidation or by mutagenic agents. Acts as a DNA glycosylase that recognizes and removes damaged bases. Has a preference for oxidized purines, such as 7,8-dihydro-8-oxoguanine (8-oxoG). Has AP (apurinic/apyrimidinic) lyase activity and introduces nicks in the DNA strand. Cleaves the DNA backbone by beta-delta elimination to generate a single-strand break at the site of the removed base with both 3'- and 5'-phosphates. This chain is Formamidopyrimidine-DNA glycosylase, found in Salmonella newport (strain SL254).